The sequence spans 159 residues: MRIGHGFDVHAFGGEGPIIIGGVRIPYEKGLLAHSDGDVALHALTDALLGAAALGDIGKLFPDTDPTFKGADSRELLREAWRRIQAKGYALGNVDVTIIAQAPRMLPHIPQMRVFIAEDLGCHMDDVNVKATTTEKLGFTGRGEGIACEAVALLIKATK.

The a divalent metal cation site is built by aspartate 8 and histidine 10. 4-CDP-2-C-methyl-D-erythritol 2-phosphate is bound by residues 8–10 and 34–35; these read DVH and HS. Position 42 (histidine 42) interacts with a divalent metal cation. 4-CDP-2-C-methyl-D-erythritol 2-phosphate is bound by residues 56–58, 61–65, 100–106, 132–135, phenylalanine 139, and arginine 142; these read DIG, FPDTD, AQAPRML, and TTTE.

The protein belongs to the IspF family. Homotrimer. It depends on a divalent metal cation as a cofactor.

It catalyses the reaction 4-CDP-2-C-methyl-D-erythritol 2-phosphate = 2-C-methyl-D-erythritol 2,4-cyclic diphosphate + CMP. It participates in isoprenoid biosynthesis; isopentenyl diphosphate biosynthesis via DXP pathway; isopentenyl diphosphate from 1-deoxy-D-xylulose 5-phosphate: step 4/6. Its function is as follows. Involved in the biosynthesis of isopentenyl diphosphate (IPP) and dimethylallyl diphosphate (DMAPP), two major building blocks of isoprenoid compounds. Catalyzes the conversion of 4-diphosphocytidyl-2-C-methyl-D-erythritol 2-phosphate (CDP-ME2P) to 2-C-methyl-D-erythritol 2,4-cyclodiphosphate (ME-CPP) with a corresponding release of cytidine 5-monophosphate (CMP). This chain is 2-C-methyl-D-erythritol 2,4-cyclodiphosphate synthase, found in Escherichia coli O45:K1 (strain S88 / ExPEC).